We begin with the raw amino-acid sequence, 162 residues long: UPF0254 protein MTH1148 homolog (162 aa).

It belongs to the UPF0254 family.

The protein is UPF0254 protein MTH1148 homolog of Methanothermobacter thermautotrophicus (strain Winter) (Methanobacterium thermoautotrophicum).